The chain runs to 917 residues: von Willebrand factor A domain-containing protein DDB_G0285975 (917 aa).

The segment at 12–51 (DTTTTTTPTTPTTPTTPTTTPTTTTTPTTTPTTTTTSTTP) is disordered. Over residues 13–51 (TTTTTTPTTPTTPTTPTTTPTTTTTPTTTPTTTTTSTTP) the composition is skewed to low complexity. The region spanning 87 to 215 (RYNTGLKNIS…NVTIHLTIIS (129 aa)) is the VIT domain. The VWFA domain maps to 339–507 (EFIFLIDCSG…NFEEQVMKLV (169 aa)). The 63-residue stretch at 679 to 741 (LFSSENRNQT…INSIPQKSNI (63 aa)) folds into the t-SNARE coiled-coil homology domain. Composition is skewed to low complexity over residues 751-760 (SPSEVSTSKS) and 774-818 (NNNN…NNNN). The disordered stretch occupies residues 751-822 (SPSEVSTSKS…NNNNNNSDNS (72 aa)).

In Dictyostelium discoideum (Social amoeba), this protein is von Willebrand factor A domain-containing protein DDB_G0285975.